A 31-amino-acid chain; its full sequence is Toxin BmKK12 (31 aa).

Q1 carries the post-translational modification Pyrrolidone carboxylic acid. Disulfide bonds link C4/C20, C10/C25, and C14/C27. At P31 the chain carries Proline amide.

It belongs to the short scorpion toxin superfamily. Potassium channel inhibitor family. Alpha-KTx 17 subfamily. The N-terminus is blocked. Expressed by the venom gland.

The protein localises to the secreted. Its function is as follows. Blocker of potassium channels (Kv). The protein is Toxin BmKK12 of Olivierus martensii (Manchurian scorpion).